A 227-amino-acid chain; its full sequence is PKHD-type hydroxylase Neut_0373 (227 aa).

Residues 78 to 179 enclose the Fe2OG dioxygenase domain; it reads KIMPPFFNRY…RIACFMFIQS (102 aa). Positions 97, 99, and 160 each coordinate Fe cation. Arg170 contributes to the 2-oxoglutarate binding site.

The cofactor is Fe(2+). L-ascorbate is required as a cofactor.

The polypeptide is PKHD-type hydroxylase Neut_0373 (Nitrosomonas eutropha (strain DSM 101675 / C91 / Nm57)).